The chain runs to 387 residues: Succinate--CoA ligase [ADP-forming] subunit beta (387 aa).

One can recognise an ATP-grasp domain in the interval 9–236 (KELFAKHNVP…RDATDPLELK (228 aa)). Residues Lys-45, 52–54 (GRG), Ser-94, and Glu-99 each bind ATP. Asn-191 and Asp-205 together coordinate Mg(2+). Residues Asn-256 and 318–320 (GIT) contribute to the substrate site.

Belongs to the succinate/malate CoA ligase beta subunit family. As to quaternary structure, heterotetramer of two alpha and two beta subunits. Requires Mg(2+) as cofactor.

The catalysed reaction is succinate + ATP + CoA = succinyl-CoA + ADP + phosphate. It carries out the reaction GTP + succinate + CoA = succinyl-CoA + GDP + phosphate. It functions in the pathway carbohydrate metabolism; tricarboxylic acid cycle; succinate from succinyl-CoA (ligase route): step 1/1. In terms of biological role, succinyl-CoA synthetase functions in the citric acid cycle (TCA), coupling the hydrolysis of succinyl-CoA to the synthesis of either ATP or GTP and thus represents the only step of substrate-level phosphorylation in the TCA. The beta subunit provides nucleotide specificity of the enzyme and binds the substrate succinate, while the binding sites for coenzyme A and phosphate are found in the alpha subunit. This Mycolicibacterium smegmatis (strain ATCC 700084 / mc(2)155) (Mycobacterium smegmatis) protein is Succinate--CoA ligase [ADP-forming] subunit beta.